Consider the following 566-residue polypeptide: Sister chromatid cohesion protein 1 (566 aa).

Serine 161 is modified (phosphoserine). A Phosphoserine; by CDC5 modification is found at serine 175. Lysine 210 carries the N6-acetyllysine; by ECO1 modification. Residue serine 263 is modified to Phosphoserine; by CDC5. Serine 307 is modified (phosphoserine). The segment at 325 to 356 is disordered; it reads SIQIDEETENSESIASSNTYKEERSNNLLTPQ. Threonine 354 bears the Phosphothreonine mark.

It belongs to the rad21 family. As to quaternary structure, interacts directly with IRR1/SCC3 in cohesin complex. Cohesin complexes are composed of the SMC1 and SMC3 heterodimer attached via their hinge domain, MCD1/SCC1 which link them, and IRR1, which interacts with MCD1. The cohesin complex also interacts with SCC2, which is required for its association with chromosomes. Cleaved by ESP1 at the onset of anaphase. Post-translationally, phosphorylated by CDC5/Polo-like kinase at the onset of anaphase. Phosphorylation takes places at proximity to cleavage sites and is required for an efficient cleavage by ESP1. In terms of processing, acetylated by ECO1.

Its subcellular location is the nucleus. It is found in the chromosome. It localises to the centromere. Its function is as follows. Cleavable component of the cohesin complex involved in chromosome cohesion during cell cycle. The cohesin complex is required for the cohesion of sister chromatids after DNA replication. The cohesin complex apparently forms a large proteinaceous ring within which sister chromatids can be trapped. At metaphase-anaphase transition, this protein is cleaved by ESP1 and dissociates from chromatin, allowing sister chromatids to segregate. In Saccharomyces cerevisiae (strain ATCC 204508 / S288c) (Baker's yeast), this protein is Sister chromatid cohesion protein 1 (MCD1).